Reading from the N-terminus, the 530-residue chain is Probable 1,4-beta-D-glucan cellobiohydrolase B (530 aa).

Residues 1-26 (MLASTFSYRMYKTALILAALLGSGQA) form the signal peptide. A catalytic region spans residues 27–461 (QQVGTSQAEV…SNIKVGPIGS (435 aa)). The Nucleophile role is filled by glutamate 238. The Proton donor role is filled by glutamate 243. The N-linked (GlcNAc...) asparagine glycan is linked to asparagine 296. Residues 462-492 (TFNSGGSNPGGGTTTTAKPTTTTTTAGSPGG) are disordered. The segment at 462-494 (TFNSGGSNPGGGTTTTAKPTTTTTTAGSPGGTG) is ser/Thr-rich linker. Over residues 475-488 (TTTAKPTTTTTTAG) the composition is skewed to low complexity. The region spanning 494-530 (GVAQHYGQCGGNGWQGPTTCASPYTCQKLNDFYSQCL) is the CBM1 domain. Cystine bridges form between cysteine 502-cysteine 519 and cysteine 513-cysteine 529.

The protein belongs to the glycosyl hydrolase 7 (cellulase C) family.

It localises to the secreted. It catalyses the reaction Hydrolysis of (1-&gt;4)-beta-D-glucosidic linkages in cellulose and cellotetraose, releasing cellobiose from the non-reducing ends of the chains.. The biological conversion of cellulose to glucose generally requires three types of hydrolytic enzymes: (1) Endoglucanases which cut internal beta-1,4-glucosidic bonds; (2) Exocellobiohydrolases that cut the disaccharide cellobiose from the non-reducing end of the cellulose polymer chain; (3) Beta-1,4-glucosidases which hydrolyze the cellobiose and other short cello-oligosaccharides to glucose. In Neosartorya fischeri (strain ATCC 1020 / DSM 3700 / CBS 544.65 / FGSC A1164 / JCM 1740 / NRRL 181 / WB 181) (Aspergillus fischerianus), this protein is Probable 1,4-beta-D-glucan cellobiohydrolase B (cbhB).